Here is a 200-residue protein sequence, read N- to C-terminus: NADH-quinone oxidoreductase subunit C (200 aa).

It belongs to the complex I 30 kDa subunit family. In terms of assembly, NDH-1 is composed of 14 different subunits. Subunits NuoB, C, D, E, F, and G constitute the peripheral sector of the complex.

It is found in the cell inner membrane. The enzyme catalyses a quinone + NADH + 5 H(+)(in) = a quinol + NAD(+) + 4 H(+)(out). Functionally, NDH-1 shuttles electrons from NADH, via FMN and iron-sulfur (Fe-S) centers, to quinones in the respiratory chain. The immediate electron acceptor for the enzyme in this species is believed to be ubiquinone. Couples the redox reaction to proton translocation (for every two electrons transferred, four hydrogen ions are translocated across the cytoplasmic membrane), and thus conserves the redox energy in a proton gradient. This chain is NADH-quinone oxidoreductase subunit C, found in Maricaulis maris (strain MCS10) (Caulobacter maris).